A 56-amino-acid polypeptide reads, in one-letter code: Large ribosomal subunit protein bL32 (56 aa).

The segment at 1-56 (MAVQQNRKTRSKRGMRRSHDALSAPTLSQDKETGTTHRRHHVAPDGFYRGRKVVDV) is disordered. Positions 7–16 (RKTRSKRGMR) are enriched in basic residues.

It belongs to the bacterial ribosomal protein bL32 family.

This chain is Large ribosomal subunit protein bL32, found in Chromohalobacter salexigens (strain ATCC BAA-138 / DSM 3043 / CIP 106854 / NCIMB 13768 / 1H11).